A 1281-amino-acid chain; its full sequence is Protein ETHYLENE-INSENSITIVE 2 (1281 aa).

Over 1 to 21 (MDGQQLRSSESPASGGGGVTG) the chain is Cytoplasmic. The helical transmembrane segment at 22–42 (GGAPHLFHALGPALLISIGYI) threads the bilayer. The Extracellular segment spans residues 43–61 (DLGKWVAAVEAGSRFGLDL). A helical membrane pass occupies residues 62–82 (VLLALLFNFMAILCQYLAACI). At 83–112 (GTVTGRSLAEICHQEYSRPTCIFLGVQAGL) the chain is on the cytoplasmic side. Residues 113–133 (SLLTSELTMIFGIALGFNLLF) form a helical membrane-spanning segment. The Extracellular portion of the chain corresponds to 134–137 (EYDD). Residues 138–158 (LITGICFATVVPNLLPYAISH) traverse the membrane as a helical segment. Residues 159-163 (LGKKM) are Cytoplasmic-facing. A helical membrane pass occupies residues 164-184 (VGTLNACIAGFALLCYVLGLL). Over 185 to 208 (VSQPQIPLTTNVIFPKLSGESAYS) the chain is Extracellular. A helical membrane pass occupies residues 209-229 (LMALLGANVMAHNFYIHSSVV). The Cytoplasmic portion of the chain corresponds to 230–238 (QGQKRSAFA). The helical transmembrane segment at 239 to 259 (VGALFHDHLFSVLFIFTGIFL) threads the bilayer. Residues 260-297 (VNHVLMNSAAADSTNTLLLTFQDVVELMNQIFVNPMAP) are Extracellular-facing. Residues 298–318 (TIFLVVLLFSSHIISLTSAIG) traverse the membrane as a helical segment. At 319 to 325 (SQVISQH) the chain is on the cytoplasmic side. Residues 326–346 (LFGINLPLSGHHLILKAFAIV) traverse the membrane as a helical segment. Residues 347-362 (PALYCAKVAGAEGIYQ) lie on the Extracellular side of the membrane. The chain crosses the membrane as a helical span at residues 363-383 (LLIICQIIQAMLLPSSVVPLF). The Cytoplasmic segment spans residues 384-400 (RVASSRLIMGAHRVSLH). Residues 401 to 421 (LEILTFLAFLLMLFSNIIFMA) traverse the membrane as a helical segment. Over 422-447 (EMLFGDSGWLNTLKGNTGSPVVFPST) the chain is Extracellular. Residues 448–468 (VLITVACVSVAFSLYMAVTPL) traverse the membrane as a helical segment. The Cytoplasmic portion of the chain corresponds to 469–1281 (KSGSHEAELQ…KRRLSSKGQQ (813 aa)). Disordered regions lie at residues 540-565 (IESDHDSQHSTAHTSTAPESCHSPSF) and 593-665 (ESTV…NGSG). Residues 548–557 (HSTAHTSTAP) show a composition bias toward polar residues. Over residues 599–610 (VDSKSTGERDIE) the composition is skewed to basic and acidic residues.

It belongs to the NRAMP (TC 2.A.55) family. Expressed in roots, leaf sheaths, leaf blades, flowers, developing seeds, germinating seeds and young seedlings. Expressed in adventitious roots, vascular tissues of the seminal roots, lateral roots, the connecting region between vascular tissues and lateral roots, mature leaf, mature stem, tips of adventitious roots derived from the node, shoot apex, young panicle, anthers, pistil, stigma, ovary, seed coat and fruit coat pericarp.

It is found in the membrane. Functionally, central factor in ethylene signaling pathways that control development, senescence and grain size. Acts as a positive component of the ethylene-signaling pathway. In Oryza sativa subsp. japonica (Rice), this protein is Protein ETHYLENE-INSENSITIVE 2.